Reading from the N-terminus, the 467-residue chain is Asparagine--tRNA ligase (467 aa).

Belongs to the class-II aminoacyl-tRNA synthetase family. As to quaternary structure, homodimer.

The protein localises to the cytoplasm. It carries out the reaction tRNA(Asn) + L-asparagine + ATP = L-asparaginyl-tRNA(Asn) + AMP + diphosphate + H(+). The polypeptide is Asparagine--tRNA ligase (Histophilus somni (strain 2336) (Haemophilus somnus)).